Reading from the N-terminus, the 102-residue chain is Small ribosomal subunit protein uS10 (102 aa).

This sequence belongs to the universal ribosomal protein uS10 family. Part of the 30S ribosomal subunit.

In terms of biological role, involved in the binding of tRNA to the ribosomes. In Macrococcus caseolyticus (strain JCSC5402) (Macrococcoides caseolyticum), this protein is Small ribosomal subunit protein uS10.